A 265-amino-acid polypeptide reads, in one-letter code: Probable cell division protein kinase ECU08_0230 (265 aa).

The Protein kinase domain occupies 4–263; the sequence is YILGALIGSG…IMEILENEYG (260 aa). ATP-binding positions include 10–18 and K33; that span reads IGSGTYGEV. D121 serves as the catalytic Proton acceptor.

This sequence belongs to the protein kinase superfamily. CMGC Ser/Thr protein kinase family. CDC2/CDKX subfamily.

The protein resides in the nucleus. It carries out the reaction L-seryl-[protein] + ATP = O-phospho-L-seryl-[protein] + ADP + H(+). The enzyme catalyses L-threonyl-[protein] + ATP = O-phospho-L-threonyl-[protein] + ADP + H(+). In terms of biological role, may play a role in the control of the eukaryotic cell cycle. This Encephalitozoon cuniculi (strain GB-M1) (Microsporidian parasite) protein is Probable cell division protein kinase ECU08_0230.